We begin with the raw amino-acid sequence, 379 residues long: Chaperone protein DnaJ (379 aa).

Residues 5-69 enclose the J domain; it reads EYYERLGVDK…QKRAAYDQYG (65 aa). The segment at 141 to 223 adopts a CR-type zinc-finger fold; sequence GVEKQVKYNR…CHGSGHEKVA (83 aa). Zn(2+)-binding residues include cysteine 154, cysteine 157, cysteine 171, cysteine 174, cysteine 197, cysteine 200, cysteine 211, and cysteine 214. CXXCXGXG motif repeat units lie at residues 154-161, 171-178, 197-204, and 211-218; these read CHTCGGSG, CHKCGGRG, CDVCNGTG, and CETCHGSG.

The protein belongs to the DnaJ family. In terms of assembly, homodimer. The cofactor is Zn(2+).

Its subcellular location is the cytoplasm. Participates actively in the response to hyperosmotic and heat shock by preventing the aggregation of stress-denatured proteins and by disaggregating proteins, also in an autonomous, DnaK-independent fashion. Unfolded proteins bind initially to DnaJ; upon interaction with the DnaJ-bound protein, DnaK hydrolyzes its bound ATP, resulting in the formation of a stable complex. GrpE releases ADP from DnaK; ATP binding to DnaK triggers the release of the substrate protein, thus completing the reaction cycle. Several rounds of ATP-dependent interactions between DnaJ, DnaK and GrpE are required for fully efficient folding. Also involved, together with DnaK and GrpE, in the DNA replication of plasmids through activation of initiation proteins. This Lactococcus lactis subsp. lactis (strain IL1403) (Streptococcus lactis) protein is Chaperone protein DnaJ.